The chain runs to 255 residues: Kallikrein-4 (255 aa).

An N-terminal signal peptide occupies residues 1 to 25 (MMVTARTPWGWFLGCLILEVTGASA). The propeptide occupies 26 to 31 (SSVSSR). Residues 32–253 (IIQGQDCSPH…FTNWIQTIIQ (222 aa)) form the Peptidase S1 domain. His41 is a binding site for Zn(2+). A disulfide bridge connects residues Cys57 and Cys73. His72 (charge relay system) is an active-site residue. Glu92 provides a ligand contact to Zn(2+). Residue Asp117 is the Charge relay system of the active site. Residues Asn124 and Asn170 are each glycosylated (N-linked (GlcNAc...) asparagine). 3 disulfide bridges follow: Cys149–Cys214, Cys179–Cys193, and Cys204–Cys229. The active-site Charge relay system is Ser208.

Belongs to the peptidase S1 family. Kallikrein subfamily. N-glycosylated. The N-glycan structures are of complex diantennary or triantennary type, which may be further modified with up to 2 sialic acid residues.

It localises to the secreted. Its function is as follows. Has a major role in enamel formation. Required during the maturation stage of tooth development for clearance of enamel proteins and normal structural patterning of the crystalline matrix. The chain is Kallikrein-4 from Mus musculus (Mouse).